The sequence spans 26 residues: Toxin TdII-1 (26 aa).

The protein belongs to the long (4 C-C) scorpion toxin superfamily. Sodium channel inhibitor family. Beta subfamily. As to expression, expressed by the venom gland.

It is found in the secreted. Beta toxins bind voltage-independently at site-4 of sodium channels (Nav) and shift the voltage of activation toward more negative potentials thereby affecting sodium channel activation and promoting spontaneous and repetitive firing. This toxin is active against mammals and crustaceans. This chain is Toxin TdII-1, found in Tityus discrepans (Venezuelan scorpion).